A 394-amino-acid polypeptide reads, in one-letter code: Tryptophan synthase beta chain (394 aa).

Lys90 bears the N6-(pyridoxal phosphate)lysine mark.

Belongs to the TrpB family. As to quaternary structure, tetramer of two alpha and two beta chains. The cofactor is pyridoxal 5'-phosphate.

It carries out the reaction (1S,2R)-1-C-(indol-3-yl)glycerol 3-phosphate + L-serine = D-glyceraldehyde 3-phosphate + L-tryptophan + H2O. It functions in the pathway amino-acid biosynthesis; L-tryptophan biosynthesis; L-tryptophan from chorismate: step 5/5. The beta subunit is responsible for the synthesis of L-tryptophan from indole and L-serine. The protein is Tryptophan synthase beta chain of Bacteroides thetaiotaomicron (strain ATCC 29148 / DSM 2079 / JCM 5827 / CCUG 10774 / NCTC 10582 / VPI-5482 / E50).